The sequence spans 127 residues: Large ribosomal subunit protein bL17 (127 aa).

This sequence belongs to the bacterial ribosomal protein bL17 family. In terms of assembly, part of the 50S ribosomal subunit. Contacts protein L32.

The polypeptide is Large ribosomal subunit protein bL17 (Aeromonas hydrophila subsp. hydrophila (strain ATCC 7966 / DSM 30187 / BCRC 13018 / CCUG 14551 / JCM 1027 / KCTC 2358 / NCIMB 9240 / NCTC 8049)).